We begin with the raw amino-acid sequence, 201 residues long: MSIQHFQRKLGITKYSIVTNSNDSVTLRLMTEHDLAMLYEWLNRSHIVEWWGGEEARPTLADVQEQYLPSVLAQESVTPYIAMLNGEPIGYAQSYVALGSGDGWWEEETDPGVRGIDQLLANASQLGKGLGTKLVRALVELLFNDPEVTKIQTDPSPSNLRAIRCYEKAGFERQGTVTTPDGPAVYMVQTRQAFERTRRFA.

The 168-residue stretch at 25–192 (VTLRLMTEHD…PAVYMVQTRQ (168 aa)) folds into the N-acetyltransferase domain. Substrate contacts are provided by tryptophan 51 and aspartate 154. Asparagine 159 is a binding site for acetyl-CoA.

Homodimer.

It carries out the reaction kanamycin B + acetyl-CoA = N(6')-acetylkanamycin B + CoA + H(+). Its function is as follows. Catalyzes the transfer of an acetyl group from acetyl-CoA to the 6'-amino group of aminoglycoside molecules conferring resistance to antibiotics containing the purpurosamine ring including amikacin and kanamycin. This is Aminoglycoside N(6')-acetyltransferase type 1 (aacA4) from Serratia marcescens.